The following is a 212-amino-acid chain: 3-isopropylmalate dehydratase small subunit (212 aa).

This sequence belongs to the LeuD family. LeuD type 1 subfamily. In terms of assembly, heterodimer of LeuC and LeuD.

The enzyme catalyses (2R,3S)-3-isopropylmalate = (2S)-2-isopropylmalate. It participates in amino-acid biosynthesis; L-leucine biosynthesis; L-leucine from 3-methyl-2-oxobutanoate: step 2/4. Catalyzes the isomerization between 2-isopropylmalate and 3-isopropylmalate, via the formation of 2-isopropylmaleate. In Methylococcus capsulatus (strain ATCC 33009 / NCIMB 11132 / Bath), this protein is 3-isopropylmalate dehydratase small subunit.